The following is a 494-amino-acid chain: Solute carrier family 2, facilitated glucose transporter member 3 (494 aa).

The Cytoplasmic portion of the chain corresponds to 1–10; that stretch reads MGTTKVTTPL. The chain crosses the membrane as a helical span at residues 11 to 32; sequence IFAISIATIGSFQFGYNTGVIN. The Extracellular segment spans residues 33–64; the sequence is APEAIIKDFLNYTLEERSETPPSSVLLTSLWS. N-linked (GlcNAc...) asparagine glycosylation occurs at asparagine 43. Residues 65–85 form a helical membrane-spanning segment; the sequence is LSVAIFSVGGMIGSFSVGLFV. At 86–90 the chain is on the cytoplasmic side; that stretch reads NRFGR. The chain crosses the membrane as a helical span at residues 91-111; that stretch reads RNSMLIVNLLAIAGGCLMGFC. Residues 112-118 lie on the Extracellular side of the membrane; that stretch reads KIAESVE. A helical transmembrane segment spans residues 119-142; that stretch reads MLILGRLIIGLFCGLCTGFVPMYI. Topologically, residues 143-153 are cytoplasmic; the sequence is GEISPTALRGA. Residues 154-174 traverse the membrane as a helical segment; sequence FGTLNQLGIVIGILVAQIFGL. Residue glutamine 159 participates in D-glucose binding. Residues 175–183 are Extracellular-facing; that stretch reads KVILGTEDL. The chain crosses the membrane as a helical span at residues 184 to 204; that stretch reads WPLLLGFTILPAIIQCAALPF. The Cytoplasmic segment spans residues 205-269; the sequence is CPESPRFLLI…LFRAPNYRQP (65 aa). Residue threonine 232 is modified to Phosphothreonine. Residues 270–290 traverse the membrane as a helical segment; sequence IIISIMLQLSQQLSGINAVFY. Residues 277–279 form an important for selectivity against fructose region; that stretch reads QLS. D-glucose-binding positions include 280–281 and asparagine 286; that span reads QQ. Over 291-304 the chain is Extracellular; the sequence is YSTGIFKDAGVQEP. Residues 305-325 traverse the membrane as a helical segment; the sequence is VYATIGAGVVNTIFTVVSVFL. Asparagine 315 is a binding site for D-glucose. Residues 326–331 are Cytoplasmic-facing; it reads VERAGR. Residues 332 to 352 form a helical membrane-spanning segment; that stretch reads RTLHLIGLGGMAFCSILMTIS. The Extracellular portion of the chain corresponds to 353–363; the sequence is LLLKDNYSWMS. A helical membrane pass occupies residues 364–389; that stretch reads FICIGAILVFVAFFEIGPGPIPWFIV. Glutamate 378 and tryptophan 386 together coordinate D-glucose. The Cytoplasmic portion of the chain corresponds to 390 to 399; sequence AELFGQGPRP. Residues 400–420 form a helical membrane-spanning segment; it reads AAMAVAGCSNWTSNFLVGLLF. Topologically, residues 421 to 429 are extracellular; the sequence is PSATFYLGA. The chain crosses the membrane as a helical span at residues 430–450; the sequence is YVFIVFTVFLVIFWVFTFFKV. Over 451–494 the chain is Cytoplasmic; it reads PETRGRTFEEITRAFEGQVQTGTRGEKGPIMEMNSIQPTKDTNA. The disordered stretch occupies residues 473–494; that stretch reads TRGEKGPIMEMNSIQPTKDTNA. Positions 484–494 are enriched in polar residues; the sequence is NSIQPTKDTNA. Serine 485 bears the Phosphoserine mark. Threonine 492 is subject to Phosphothreonine.

Belongs to the major facilitator superfamily. Sugar transporter (TC 2.A.1.1) family. Glucose transporter subfamily. As to quaternary structure, interacts with SMIM43; the interaction may promote SLC2A3-mediated glucose transport to meet the energy needs of mesendoderm differentiation. As to expression, detected in placenta.

Its subcellular location is the cell membrane. The protein resides in the perikaryon. It localises to the cell projection. The enzyme catalyses D-glucose(out) = D-glucose(in). It catalyses the reaction D-galactose(in) = D-galactose(out). Its activity is regulated as follows. Deoxyglucose transport is inhibited by D-glucose, D-galactose and maltose. Galactose transport is inhibited by D-glucose and maltose. Facilitative glucose transporter. Can also mediate the uptake of various other monosaccharides across the cell membrane. Mediates the uptake of glucose, 2-deoxyglucose, galactose, mannose, xylose and fucose, and probably also dehydroascorbate. Does not mediate fructose transport. Required for mesendoderm differentiation. This chain is Solute carrier family 2, facilitated glucose transporter member 3, found in Ovis aries (Sheep).